The following is a 120-amino-acid chain: Large ribosomal subunit protein uL18 (120 aa).

It belongs to the universal ribosomal protein uL18 family. In terms of assembly, part of the 50S ribosomal subunit; part of the 5S rRNA/L5/L18/L25 subcomplex. Contacts the 5S and 23S rRNAs.

Functionally, this is one of the proteins that bind and probably mediate the attachment of the 5S RNA into the large ribosomal subunit, where it forms part of the central protuberance. This Methylobacterium radiotolerans (strain ATCC 27329 / DSM 1819 / JCM 2831 / NBRC 15690 / NCIMB 10815 / 0-1) protein is Large ribosomal subunit protein uL18.